The chain runs to 304 residues: Endonuclease III-like protein 1 (304 aa).

Residues 1–22 constitute a mitochondrion transit peptide; that stretch reads MTALSARMLTRSRSLGPGAGPR. The disordered stretch occupies residues 1 to 72; sequence MTALSARMLT…SDSEKGEGAE (72 aa). Residues 23-42 are compositionally biased toward basic and acidic residues; the sequence is GCREEPGPLRRREAAAEARK. A Bipartite nuclear localization signal motif is present at residues 28–52; the sequence is PGPLRRREAAAEARKSHSPVKRPRK. Basic residues predominate over residues 43 to 55; it reads SHSPVKRPRKAQR. A phosphoserine mark is found at serine 63 and serine 65. A HhH domain is found at 191–215; sequence HYGGDIPASVAELVALPGVGPKMAH. Residue lysine 212 is the Nucleophile; for N-glycosylase activity of the active site. [4Fe-4S] cluster contacts are provided by cysteine 282, cysteine 289, cysteine 292, and cysteine 298.

The protein belongs to the Nth/MutY family. In terms of assembly, interacts with YBX1. Interacts with ERCC5/XPG; the interaction stimulates NTHL1 activity and NTHL1 binding to its DNA substrate. [4Fe-4S] cluster is required as a cofactor. In terms of processing, ubiquitinated by TRIM26; leading to proteasomal degradation. In terms of tissue distribution, widely expressed with highest levels in heart and lowest levels in lung and liver.

The protein resides in the nucleus. It localises to the mitochondrion. It catalyses the reaction 2'-deoxyribonucleotide-(2'-deoxyribose 5'-phosphate)-2'-deoxyribonucleotide-DNA = a 3'-end 2'-deoxyribonucleotide-(2,3-dehydro-2,3-deoxyribose 5'-phosphate)-DNA + a 5'-end 5'-phospho-2'-deoxyribonucleoside-DNA + H(+). With respect to regulation, APE1 displaces NTHL1 from the N-glycosylase-generated AP site in DNA, thereby increasing the turnover of the DNA N-glycosylase activity. AP lyase activity is stimulated by YBX1. ERCC5/XPG stimulates NTHL1 activity and NTHL1 binding to its DNA substrate. Its function is as follows. Bifunctional DNA N-glycosylase with associated apurinic/apyrimidinic (AP) lyase function that catalyzes the first step in base excision repair (BER), the primary repair pathway for the repair of oxidative DNA damage. The DNA N-glycosylase activity releases the damaged DNA base from DNA by cleaving the N-glycosidic bond, leaving an AP site. The AP-lyase activity cleaves the phosphodiester bond 3' to the AP site by a beta-elimination. Primarily recognizes and repairs oxidative base damage of pyrimidines. Also has 8-oxo-7,8-dihydroguanine (8-oxoG) DNA glycosylase activity. Acts preferentially on DNA damage opposite guanine residues in DNA. Is able to process lesions in nucleosomes without requiring or inducing nucleosome disruption. This chain is Endonuclease III-like protein 1, found in Homo sapiens (Human).